We begin with the raw amino-acid sequence, 307 residues long: Fructokinase (307 aa).

The protein belongs to the carbohydrate kinase PfkB family.

The enzyme catalyses D-fructose + ATP = D-fructose 6-phosphate + ADP + H(+). This Salmonella typhimurium protein is Fructokinase (scrK).